The primary structure comprises 303 residues: Probable cat1 operon transcriptional activator (303 aa).

In terms of domain architecture, HTH lysR-type spans 1 to 58 (MDLRQFRYFVAVARERNFTRAARQLNIAQPPLSRQIQLLEEEVGVPLLIRNSRPVQLT). The segment at residues 18–37 (FTRAARQLNIAQPPLSRQIQ) is a DNA-binding region (H-T-H motif).

The protein belongs to the LysR transcriptional regulatory family.

Probable positive regulator of the cat1 operon which encode enzymes responsible for the degradation of catechol to acetyl-CoA via the beta-ketoadipate pathway. The polypeptide is Probable cat1 operon transcriptional activator (Acinetobacter lwoffii).